The chain runs to 461 residues: Photosystem II CP43 reaction center protein (461 aa).

A propeptide spanning residues 1-2 (ME) is cleaved from the precursor. Threonine 3 carries the N-acetylthreonine modification. The residue at position 3 (threonine 3) is a Phosphothreonine. A run of 5 helical transmembrane segments spans residues 57-81 (LFEV…PHLA), 122-143 (LLGP…KDRN), 166-188 (KALY…RKIT), 243-263 (KPFA…LSYS), and 279-300 (WFNN…ASQA). Glutamate 355 is a [CaMn4O5] cluster binding site. A helical transmembrane segment spans residues 435–459 (RARAAAAGFEKGIDRDLEPVLFMTP).

The protein belongs to the PsbB/PsbC family. PsbC subfamily. PSII is composed of 1 copy each of membrane proteins PsbA, PsbB, PsbC, PsbD, PsbE, PsbF, PsbH, PsbI, PsbJ, PsbK, PsbL, PsbM, PsbT, PsbX, PsbY, PsbZ, Psb30/Ycf12, at least 3 peripheral proteins of the oxygen-evolving complex and a large number of cofactors. It forms dimeric complexes. Binds multiple chlorophylls and provides some of the ligands for the Ca-4Mn-5O cluster of the oxygen-evolving complex. It may also provide a ligand for a Cl- that is required for oxygen evolution. PSII binds additional chlorophylls, carotenoids and specific lipids. is required as a cofactor.

It is found in the plastid. It localises to the chloroplast thylakoid membrane. Functionally, one of the components of the core complex of photosystem II (PSII). It binds chlorophyll and helps catalyze the primary light-induced photochemical processes of PSII. PSII is a light-driven water:plastoquinone oxidoreductase, using light energy to abstract electrons from H(2)O, generating O(2) and a proton gradient subsequently used for ATP formation. This is Photosystem II CP43 reaction center protein from Nandina domestica (Heavenly bamboo).